A 161-amino-acid polypeptide reads, in one-letter code: uncharacterized protein (161 aa).

Positions 1 to 10 are enriched in polar residues; it reads MSKQQEQDTP. 3 disordered regions span residues 1–20, 55–84, and 118–161; these read MSKQQEQDTPSFGEIRQRLQ, KKTREEQIAEDEHAASLRRLGHAERSMSDE, and LLQQ…ANNS. Positions 82 to 107 form a coiled coil; sequence SDEEYARQLQEEMDRLDASIQMDKEA. A compositionally biased stretch (low complexity) spans 144 to 161; that stretch reads QQSSNTTTSSSCQSANNS.

This is an uncharacterized protein from Caenorhabditis elegans.